The primary structure comprises 517 residues: Serine carboxypeptidase ctsa-3.2 (517 aa).

An N-terminal signal peptide occupies residues 1-21 (MWWTSLVFSVLLFDLIFISNC). Ser-172 is a catalytic residue. Asn-269 is a glycosylation site (N-linked (GlcNAc...) asparagine). Catalysis depends on residues Asp-418 and His-485.

This sequence belongs to the peptidase S10 family.

The polypeptide is Serine carboxypeptidase ctsa-3.2 (Caenorhabditis elegans).